The sequence spans 100 residues: uncharacterized protein (100 aa).

A signal peptide spans 1-23 (MKYVALAFVLSLVILQISAQVGA).

In terms of tissue distribution, nacreous layer of shell (at protein level). Expressed primarily in the mantle with highest level in the mantle pallium and lower level in the mantle edge.

Its subcellular location is the secreted. This is an uncharacterized protein from Margaritifera margaritifera (Freshwater pearl mussel).